A 99-amino-acid chain; its full sequence is Acylphosphatase-2 (99 aa).

An N-acetylserine modification is found at S2. Positions 9–99 constitute an Acylphosphatase-like domain; it reads SVDYEVFGRV…LEYSSFNIRY (91 aa). Catalysis depends on residues R24 and N42. A Phosphoserine modification is found at S93.

This sequence belongs to the acylphosphatase family.

It carries out the reaction an acyl phosphate + H2O = a carboxylate + phosphate + H(+). Its function is as follows. Its physiological role is not yet clear. In Bos taurus (Bovine), this protein is Acylphosphatase-2 (ACYP2).